The following is a 225-amino-acid chain: NAD(P)H-quinone oxidoreductase subunit K, chloroplastic (225 aa).

Residues cysteine 43, cysteine 44, cysteine 108, and cysteine 139 each contribute to the [4Fe-4S] cluster site.

This sequence belongs to the complex I 20 kDa subunit family. As to quaternary structure, NDH is composed of at least 16 different subunits, 5 of which are encoded in the nucleus. [4Fe-4S] cluster serves as cofactor.

It is found in the plastid. The protein localises to the chloroplast thylakoid membrane. It carries out the reaction a plastoquinone + NADH + (n+1) H(+)(in) = a plastoquinol + NAD(+) + n H(+)(out). The catalysed reaction is a plastoquinone + NADPH + (n+1) H(+)(in) = a plastoquinol + NADP(+) + n H(+)(out). Functionally, NDH shuttles electrons from NAD(P)H:plastoquinone, via FMN and iron-sulfur (Fe-S) centers, to quinones in the photosynthetic chain and possibly in a chloroplast respiratory chain. The immediate electron acceptor for the enzyme in this species is believed to be plastoquinone. Couples the redox reaction to proton translocation, and thus conserves the redox energy in a proton gradient. In Lactuca sativa (Garden lettuce), this protein is NAD(P)H-quinone oxidoreductase subunit K, chloroplastic.